Reading from the N-terminus, the 242-residue chain is MTNKGKKKVNPFDRKQFYDIQAPSTFTNTYVGKTLVNKSAGTFSSTDALKGRVFEVNLGDLTLEDNAYRKVKLRADEVQGNKILTNFHGMDFTSDKLRSLVRKWQSLVEANVTVKTADDYVLRVFAIAFTKRQANQVKKTTYAQSSKLREVRKKMVEILTREVSNSTLSQLTSKLIPEVISREIEKSTQTIFPLQNVHIRKVKLLKQPKFDLGSLLALHGEASEEKGKKVAGGFKDVVLESV.

Belongs to the eukaryotic ribosomal protein eS1 family. In terms of assembly, component of the small ribosomal subunit. Mature ribosomes consist of a small (40S) and a large (60S) subunit. The 40S subunit contains about 33 different proteins and 1 molecule of RNA (18S). The 60S subunit contains about 49 different proteins and 3 molecules of RNA (25S, 5.8S and 5S).

The protein localises to the cytoplasm. This chain is Small ribosomal subunit protein eS1, found in Lodderomyces elongisporus (strain ATCC 11503 / CBS 2605 / JCM 1781 / NBRC 1676 / NRRL YB-4239) (Yeast).